The following is a 338-amino-acid chain: Aspartate-semialdehyde dehydrogenase (338 aa).

NADP(+) is bound by residues 13–16 and 41–42; these read SGAV and RS. Position 101 (Arg-101) interacts with phosphate. The Acyl-thioester intermediate role is filled by Cys-132. Gln-159 serves as a coordination point for substrate. NADP(+)-binding positions include 162–163 and Pro-187; that span reads SG. Position 216 (Lys-216) interacts with phosphate. Residue Arg-238 participates in substrate binding. The active-site Proton acceptor is the His-245. Residue Asn-317 participates in NADP(+) binding.

It belongs to the aspartate-semialdehyde dehydrogenase family. In terms of assembly, homodimer.

It carries out the reaction L-aspartate 4-semialdehyde + phosphate + NADP(+) = 4-phospho-L-aspartate + NADPH + H(+). Its pathway is amino-acid biosynthesis; L-lysine biosynthesis via DAP pathway; (S)-tetrahydrodipicolinate from L-aspartate: step 2/4. It participates in amino-acid biosynthesis; L-methionine biosynthesis via de novo pathway; L-homoserine from L-aspartate: step 2/3. It functions in the pathway amino-acid biosynthesis; L-threonine biosynthesis; L-threonine from L-aspartate: step 2/5. Catalyzes the NADPH-dependent formation of L-aspartate-semialdehyde (L-ASA) by the reductive dephosphorylation of L-aspartyl-4-phosphate. In Shewanella sp. (strain DB6705), this protein is Aspartate-semialdehyde dehydrogenase.